We begin with the raw amino-acid sequence, 293 residues long: Pyridoxal 5'-phosphate synthase subunit PdxS (293 aa).

Aspartate 23 is a D-ribose 5-phosphate binding site. Lysine 80 (schiff-base intermediate with D-ribose 5-phosphate) is an active-site residue. Glycine 152 is a D-ribose 5-phosphate binding site. Residue arginine 164 coordinates D-glyceraldehyde 3-phosphate. D-ribose 5-phosphate contacts are provided by residues glycine 213 and 234-235 (GS).

It belongs to the PdxS/SNZ family. As to quaternary structure, in the presence of PdxT, forms a dodecamer of heterodimers.

The catalysed reaction is aldehydo-D-ribose 5-phosphate + D-glyceraldehyde 3-phosphate + L-glutamine = pyridoxal 5'-phosphate + L-glutamate + phosphate + 3 H2O + H(+). Its pathway is cofactor biosynthesis; pyridoxal 5'-phosphate biosynthesis. Its function is as follows. Catalyzes the formation of pyridoxal 5'-phosphate from ribose 5-phosphate (RBP), glyceraldehyde 3-phosphate (G3P) and ammonia. The ammonia is provided by the PdxT subunit. Can also use ribulose 5-phosphate and dihydroxyacetone phosphate as substrates, resulting from enzyme-catalyzed isomerization of RBP and G3P, respectively. The chain is Pyridoxal 5'-phosphate synthase subunit PdxS from Syntrophus aciditrophicus (strain SB).